Here is a 226-residue protein sequence, read N- to C-terminus: Cysteine and histidine-rich domain-containing protein RAR1 (226 aa).

Zn(2+) contacts are provided by cysteine 12, cysteine 17, cysteine 31, histidine 34, cysteine 49, cysteine 50, cysteine 66, and histidine 71. The 60-residue stretch at 12–71 (CQRIGCNAMFTDDDNPQGSCQFHASGPFFHDGMKEWSCCKQRSHDFSLFLEIPGCKTGKH) folds into the CHORD 1 domain. The short motif at 104–124 (CSRCRQGFFCSDHGSQPKEQI) is the CCCH element. Positions 159, 164, 178, 181, 196, 197, 213, and 218 each coordinate Zn(2+). Positions 159-218 (CKNKGCGQTFKERDNHETACSHHPGPAVFHDRLRGWKCCDVHVKEFDEFMEIPPCTKGWH) constitute a CHORD 2 domain.

Interacts with HSP90-1, HSP90-2, SGT1A and SGT1B. Forms a ternary complex with SGT1A and barley HSP90.

Required specifically for plant innate immunity. Is essential for resistance conferred by multiple R genes recognizing different bacterial and oomycete pathogen isolates like avirulent P.syringae or H.parasitica (downy mildew). Contributes additively with SGT1B to RPP5-dependent resistance. Functions as a positive regulator of RPS5 accumulation by assisting its stabilization. May function as co-chaperone of HSP90-2 to positively regulate the steady-state accumulation of RPM1 and protect it from SGT1-mediated degradation. Acts as a negative regulator of pathogen-associated molecular pattern (PAMP)-triggered immunity. The protein is Cysteine and histidine-rich domain-containing protein RAR1 (RAR1) of Arabidopsis thaliana (Mouse-ear cress).